We begin with the raw amino-acid sequence, 398 residues long: 1-deoxy-D-xylulose 5-phosphate reductoisomerase (398 aa).

Residues threonine 11, glycine 12, serine 13, isoleucine 14, arginine 38, asparagine 39, and asparagine 125 each coordinate NADPH. Lysine 126 is a 1-deoxy-D-xylulose 5-phosphate binding site. Glutamate 127 serves as a coordination point for NADPH. Aspartate 151 contributes to the Mn(2+) binding site. Positions 152, 153, 179, and 202 each coordinate 1-deoxy-D-xylulose 5-phosphate. Residue glutamate 153 coordinates Mn(2+). An NADPH-binding site is contributed by glycine 208. Residues serine 215, asparagine 220, lysine 221, and glutamate 224 each coordinate 1-deoxy-D-xylulose 5-phosphate. Glutamate 224 lines the Mn(2+) pocket.

It belongs to the DXR family. It depends on Mg(2+) as a cofactor. Requires Mn(2+) as cofactor.

The catalysed reaction is 2-C-methyl-D-erythritol 4-phosphate + NADP(+) = 1-deoxy-D-xylulose 5-phosphate + NADPH + H(+). The protein operates within isoprenoid biosynthesis; isopentenyl diphosphate biosynthesis via DXP pathway; isopentenyl diphosphate from 1-deoxy-D-xylulose 5-phosphate: step 1/6. In terms of biological role, catalyzes the NADPH-dependent rearrangement and reduction of 1-deoxy-D-xylulose-5-phosphate (DXP) to 2-C-methyl-D-erythritol 4-phosphate (MEP). The protein is 1-deoxy-D-xylulose 5-phosphate reductoisomerase of Burkholderia cenocepacia (strain HI2424).